The primary structure comprises 113 residues: Hydrogenase maturation factor HypA (113 aa).

His-2 serves as a coordination point for Ni(2+). Residues Cys-73, Cys-76, Cys-89, and Cys-92 each contribute to the Zn(2+) site.

The protein belongs to the HypA/HybF family.

Its function is as follows. Involved in the maturation of [NiFe] hydrogenases. Required for nickel insertion into the metal center of the hydrogenase. In Beijerinckia indica subsp. indica (strain ATCC 9039 / DSM 1715 / NCIMB 8712), this protein is Hydrogenase maturation factor HypA.